Consider the following 502-residue polypeptide: ATP synthase subunit alpha (502 aa).

Residue 169 to 176 (GDRQTGKT) participates in ATP binding.

Belongs to the ATPase alpha/beta chains family. F-type ATPases have 2 components, CF(1) - the catalytic core - and CF(0) - the membrane proton channel. CF(1) has five subunits: alpha(3), beta(3), gamma(1), delta(1), epsilon(1). CF(0) has three main subunits: a(1), b(2) and c(9-12). The alpha and beta chains form an alternating ring which encloses part of the gamma chain. CF(1) is attached to CF(0) by a central stalk formed by the gamma and epsilon chains, while a peripheral stalk is formed by the delta and b chains.

It is found in the cell inner membrane. The catalysed reaction is ATP + H2O + 4 H(+)(in) = ADP + phosphate + 5 H(+)(out). Produces ATP from ADP in the presence of a proton gradient across the membrane. The alpha chain is a regulatory subunit. This is ATP synthase subunit alpha from Thermodesulfovibrio yellowstonii (strain ATCC 51303 / DSM 11347 / YP87).